The sequence spans 349 residues: 4-hydroxy-3-methylbut-2-enyl diphosphate reductase (349 aa).

Cys18 contributes to the [4Fe-4S] cluster binding site. Residues His47 and His83 each contribute to the (2E)-4-hydroxy-3-methylbut-2-enyl diphosphate site. Residues His47 and His83 each contribute to the dimethylallyl diphosphate site. Positions 47 and 83 each coordinate isopentenyl diphosphate. Cys105 serves as a coordination point for [4Fe-4S] cluster. His133 contributes to the (2E)-4-hydroxy-3-methylbut-2-enyl diphosphate binding site. His133 serves as a coordination point for dimethylallyl diphosphate. His133 contacts isopentenyl diphosphate. The active-site Proton donor is the Glu135. Thr174 provides a ligand contact to (2E)-4-hydroxy-3-methylbut-2-enyl diphosphate. Cys204 lines the [4Fe-4S] cluster pocket. (2E)-4-hydroxy-3-methylbut-2-enyl diphosphate is bound by residues Ser232, Ser233, Asn234, and Ser277. Residues Ser232, Ser233, Asn234, and Ser277 each coordinate dimethylallyl diphosphate. Isopentenyl diphosphate is bound by residues Ser232, Ser233, Asn234, and Ser277.

Belongs to the IspH family. The cofactor is [4Fe-4S] cluster.

It carries out the reaction isopentenyl diphosphate + 2 oxidized [2Fe-2S]-[ferredoxin] + H2O = (2E)-4-hydroxy-3-methylbut-2-enyl diphosphate + 2 reduced [2Fe-2S]-[ferredoxin] + 2 H(+). The catalysed reaction is dimethylallyl diphosphate + 2 oxidized [2Fe-2S]-[ferredoxin] + H2O = (2E)-4-hydroxy-3-methylbut-2-enyl diphosphate + 2 reduced [2Fe-2S]-[ferredoxin] + 2 H(+). It functions in the pathway isoprenoid biosynthesis; dimethylallyl diphosphate biosynthesis; dimethylallyl diphosphate from (2E)-4-hydroxy-3-methylbutenyl diphosphate: step 1/1. Its pathway is isoprenoid biosynthesis; isopentenyl diphosphate biosynthesis via DXP pathway; isopentenyl diphosphate from 1-deoxy-D-xylulose 5-phosphate: step 6/6. Its function is as follows. Catalyzes the conversion of 1-hydroxy-2-methyl-2-(E)-butenyl 4-diphosphate (HMBPP) into a mixture of isopentenyl diphosphate (IPP) and dimethylallyl diphosphate (DMAPP). Acts in the terminal step of the DOXP/MEP pathway for isoprenoid precursor biosynthesis. In Bartonella bacilliformis (strain ATCC 35685 / KC583 / Herrer 020/F12,63), this protein is 4-hydroxy-3-methylbut-2-enyl diphosphate reductase.